The primary structure comprises 276 residues: Putative pyruvate, phosphate dikinase regulatory protein (276 aa).

Residue 154–161 (GVSRTSKS) coordinates ADP.

Belongs to the pyruvate, phosphate/water dikinase regulatory protein family. PDRP subfamily.

The catalysed reaction is N(tele)-phospho-L-histidyl/L-threonyl-[pyruvate, phosphate dikinase] + ADP = N(tele)-phospho-L-histidyl/O-phospho-L-threonyl-[pyruvate, phosphate dikinase] + AMP + H(+). It catalyses the reaction N(tele)-phospho-L-histidyl/O-phospho-L-threonyl-[pyruvate, phosphate dikinase] + phosphate + H(+) = N(tele)-phospho-L-histidyl/L-threonyl-[pyruvate, phosphate dikinase] + diphosphate. Functionally, bifunctional serine/threonine kinase and phosphorylase involved in the regulation of the pyruvate, phosphate dikinase (PPDK) by catalyzing its phosphorylation/dephosphorylation. This is Putative pyruvate, phosphate dikinase regulatory protein from Wolbachia pipientis wMel.